The primary structure comprises 618 residues: Cell pattern formation-associated protein STU1 (618 aa).

Over residues 13–28 (MSAGPTQQPPTVTSYN) the composition is skewed to polar residues. Residues 13-105 (MSAGPTQQPP…FDTSGQIAPP (93 aa)) are disordered. Over residues 48 to 59 (YGGYPYTNGMPS) the composition is skewed to low complexity. Polar residues predominate over residues 91–101 (NQYSGFDTSGQ). The HTH APSES-type domain maps to 110–216 (RVTATLWEDE…HNISALLYHP (107 aa)). The H-T-H motif DNA-binding region spans 144–165 (GTKLLNVAGMTRGRRDGILKSE). Disordered stretches follow at residues 229-355 (AERR…YDGS) and 390-618 (SEMG…SRRR). Composition is skewed to polar residues over residues 256–266 (MSQNGSQSLSG), 284–298 (TSAS…SDSF), 305–326 (AMSN…TRSM), and 336–355 (GSTL…YDGS). Positions 438 to 451 (DHEHDPEYTHDSRT) are enriched in basic and acidic residues. Residues 452 to 476 (YDNSQSQYNYTAPPVSSISSEQAHV) show a composition bias toward polar residues. A compositionally biased stretch (low complexity) spans 494-512 (PRSAAAPQAYYQQAYSTSP). A compositionally biased stretch (polar residues) spans 513–563 (RSATHQSTSNLYNVMSNDRGSTTNGSANGDVYSQSTDLSNGYATPVTNGNA). The segment at 566–588 (KRGRDDDDDRSSSSGQMDLKRRK) is nuclear localization domain.

Belongs to the EFG1/PHD1/stuA family.

It localises to the nucleus. Functionally, transcription factor that regulates asexual reproduction. Binds the StuA-response elements (StRE) with the consensus sequence 5'-(A/T)CGCG(T/A)N(A/C)-3' at the promoters of target genes. Required for appressorium-mediated infection of rice leaves due to its involvement in the mobilization of lipids and glycogen. The chain is Cell pattern formation-associated protein STU1 from Pyricularia oryzae (strain 70-15 / ATCC MYA-4617 / FGSC 8958) (Rice blast fungus).